We begin with the raw amino-acid sequence, 352 residues long: 3-isopropylmalate dehydrogenase (352 aa).

71–87 (GAHDSAWNQLPRHLRPE) lines the NAD(+) pocket. Substrate-binding residues include Arg94, Arg104, Arg132, and Asp218. Residues Asp218, Asp242, and Asp246 each coordinate Mg(2+). NAD(+) is bound at residue 275-287 (GSAPDIAGQGVAN).

The protein belongs to the isocitrate and isopropylmalate dehydrogenases family. LeuB type 1 subfamily. As to quaternary structure, homodimer. It depends on Mg(2+) as a cofactor. Mn(2+) is required as a cofactor.

The protein resides in the cytoplasm. The catalysed reaction is (2R,3S)-3-isopropylmalate + NAD(+) = 4-methyl-2-oxopentanoate + CO2 + NADH. It participates in amino-acid biosynthesis; L-leucine biosynthesis; L-leucine from 3-methyl-2-oxobutanoate: step 3/4. Catalyzes the oxidation of 3-carboxy-2-hydroxy-4-methylpentanoate (3-isopropylmalate) to 3-carboxy-4-methyl-2-oxopentanoate. The product decarboxylates to 4-methyl-2 oxopentanoate. In Deinococcus radiodurans (strain ATCC 13939 / DSM 20539 / JCM 16871 / CCUG 27074 / LMG 4051 / NBRC 15346 / NCIMB 9279 / VKM B-1422 / R1), this protein is 3-isopropylmalate dehydrogenase.